A 666-amino-acid polypeptide reads, in one-letter code: DNA-directed RNA polymerase subunit beta' (666 aa).

Zn(2+)-binding residues include C69, C71, C87, and C90. Residues D489, D491, and D493 each coordinate Mg(2+).

The protein belongs to the RNA polymerase beta' chain family. RpoC1 subfamily. In terms of assembly, in plastids the minimal PEP RNA polymerase catalytic core is composed of four subunits: alpha, beta, beta', and beta''. When a (nuclear-encoded) sigma factor is associated with the core the holoenzyme is formed, which can initiate transcription. It depends on Mg(2+) as a cofactor. The cofactor is Zn(2+).

It is found in the plastid. It localises to the chloroplast. It carries out the reaction RNA(n) + a ribonucleoside 5'-triphosphate = RNA(n+1) + diphosphate. Functionally, DNA-dependent RNA polymerase catalyzes the transcription of DNA into RNA using the four ribonucleoside triphosphates as substrates. The protein is DNA-directed RNA polymerase subunit beta' of Chara vulgaris (Common stonewort).